Reading from the N-terminus, the 206-residue chain is Pyridoxine/pyridoxamine 5'-phosphate oxidase (206 aa).

Residues 55 to 60 (RVVLLK), 70 to 71 (YT), R76, K77, and Q99 contribute to the FMN site. K60 serves as a coordination point for substrate. Positions 117, 121, and 125 each coordinate substrate. Residues 134-135 (QS) and W179 contribute to the FMN site. 185–187 (RLH) contacts substrate. FMN is bound at residue R189.

Belongs to the pyridoxamine 5'-phosphate oxidase family. As to quaternary structure, homodimer. FMN is required as a cofactor.

The enzyme catalyses pyridoxamine 5'-phosphate + O2 + H2O = pyridoxal 5'-phosphate + H2O2 + NH4(+). The catalysed reaction is pyridoxine 5'-phosphate + O2 = pyridoxal 5'-phosphate + H2O2. It functions in the pathway cofactor metabolism; pyridoxal 5'-phosphate salvage; pyridoxal 5'-phosphate from pyridoxamine 5'-phosphate: step 1/1. Its pathway is cofactor metabolism; pyridoxal 5'-phosphate salvage; pyridoxal 5'-phosphate from pyridoxine 5'-phosphate: step 1/1. In terms of biological role, catalyzes the oxidation of either pyridoxine 5'-phosphate (PNP) or pyridoxamine 5'-phosphate (PMP) into pyridoxal 5'-phosphate (PLP). The protein is Pyridoxine/pyridoxamine 5'-phosphate oxidase of Myxococcus xanthus (strain DK1622).